The chain runs to 491 residues: Allene oxide synthase 3 (491 aa).

Positions 104, 135, and 139 each coordinate heme b. 2 residues coordinate (13S)-hydroperoxy-(9Z,11E)-octadecadienoate: Asn-296 and Lys-302. Residue Asn-296 coordinates (13S)-hydroperoxy-(9Z,11E,15Z)-octadecatrienoate. Heme b-binding residues include Lys-442 and Cys-444.

It belongs to the cytochrome P450 family. Requires heme b as cofactor. In terms of tissue distribution, expressed in roots. Not detected in aerial tissues, including cotyledons, leaves, stems and flower buds.

It catalyses the reaction (13S)-hydroperoxy-(9Z,11E,15Z)-octadecatrienoate = (9Z,13S,15Z)-12,13-epoxyoctadeca-9,11,15-trienoate + H2O. The catalysed reaction is (13S)-hydroperoxy-(9Z,11E)-octadecadienoate = (9Z,13S)-12,13-epoxyoctadeca-9,11-dienoate + H2O. It carries out the reaction (9Z,13S,15Z)-12,13-epoxyoctadeca-9,11,15-trienoate = (9S,13S,15Z)-12-oxophyto-10,15-dienoate. Its function is as follows. Cytochrome P450 metabolizing both 13- and 9-hydroperoxides of linoleic and linolenic acids, but with a marked preference for 9-hydroperoxy fatty acids. Catalyzes not only the synthesis of allene oxide, but also its hydrolysis and cyclization. The first step is the synthesis of (12Z)-9,10-epoxyoctadeca-10,12-dienoic acid (9,10-EOD) and the final products are (9R)-alpha-ketol and the racemic cis-10-oxo-11-phytoenoic acid. The cyclase activity possesses regiospecificity and (9Z)-12,13-epoxyoctadeca-9,11-dienoic acid (12,13-EOD) is significantly less efficient as a substrate for cyclopentenone production than 9,10-EOD. Has no hydroperoxide lyase activity. May play a defensive role against soil-borne pests that affect roots or juvenile tissues as they emerge from the germinating seed. The protein is Allene oxide synthase 3 of Solanum lycopersicum (Tomato).